The following is a 298-amino-acid chain: Probable oxidoreductase (298 aa).

An NAD(+)-binding site is contributed by 9 to 33; it reads VVTGGASGLGAETVRALAAAGAEVT. Residue Ser-139 participates in substrate binding. Tyr-165 acts as the Proton acceptor in catalysis.

Belongs to the short-chain dehydrogenases/reductases (SDR) family.

This Streptomyces antibioticus protein is Probable oxidoreductase.